The sequence spans 229 residues: ATP-dependent dethiobiotin synthetase BioD (229 aa).

12–17 (GVGKTV) contributes to the ATP binding site. Thr-16 is a Mg(2+) binding site. Lys-37 is an active-site residue. Residue Thr-41 coordinates substrate. Residues Asp-53, 112–115 (EGAG), and 201–203 (PAG) each bind ATP. Residues Asp-53 and Glu-112 each coordinate Mg(2+).

The protein belongs to the dethiobiotin synthetase family. In terms of assembly, homodimer. It depends on Mg(2+) as a cofactor.

It is found in the cytoplasm. The catalysed reaction is (7R,8S)-7,8-diammoniononanoate + CO2 + ATP = (4R,5S)-dethiobiotin + ADP + phosphate + 3 H(+). The protein operates within cofactor biosynthesis; biotin biosynthesis; biotin from 7,8-diaminononanoate: step 1/2. Catalyzes a mechanistically unusual reaction, the ATP-dependent insertion of CO2 between the N7 and N8 nitrogen atoms of 7,8-diaminopelargonic acid (DAPA, also called 7,8-diammoniononanoate) to form a ureido ring. This Mycobacterium sp. (strain KMS) protein is ATP-dependent dethiobiotin synthetase BioD.